A 310-amino-acid polypeptide reads, in one-letter code: Isoflavone reductase homolog A622 (310 aa).

NADP(+) is bound by residues 13 to 19 (GGTGYIG), R38, and K47. Catalysis depends on K135, which acts as the Proton acceptor. R139 contributes to the NADP(+) binding site.

The protein belongs to the NmrA-type oxidoreductase family. Isoflavone reductase subfamily. Monomer.

It localises to the cytoplasm. It functions in the pathway alkaloid biosynthesis; nicotine biosynthesis. Functionally, NADPH-binding protein. Involved in the biosynthesis of pyridine alkaloid natural products, leading mainly to the production of anabasine, anatabine, nicotine and nornicotine, effective deterrents against herbivores with antiparasitic and pesticide properties (neurotoxins); nornicotine serves as the precursor in the synthesis of the carcinogen compound N'-nitrosonornicotine (NNN). Reductase involved in a late step of tobacco alkaloid biosynthesis. Triggers either the formation of a nicotinic acid-derived precursor or the final condensation reaction of tobacco alkaloids. This Nicotiana glauca (Glaucous tobacco) protein is Isoflavone reductase homolog A622.